The following is a 435-amino-acid chain: Angio-associated migratory cell protein (435 aa).

The interval 1–65 is disordered; that stretch reads MESESESGAA…EEEEEGNEEG (65 aa). Ser-20 carries the post-translational modification Phosphoserine. The segment covering 39 to 63 has biased composition (acidic residues); it reads DPDDLAQEMEDVDFEEEEEEEEGNE. WD repeat units follow at residues 90–130, 133–172, 174–213, 215–255, 259–300, 316–355, 357–396, and 399–434; these read LHSA…LLFE, GHKDSVTCAGFSHDSTLVATGDMSGLLKVWQVDTKEEVWS, EAGDLEWMEWHPRAPVLLAGTADGNTWMWKVPNGDCKTFQ, PNCP…HVLK, GHQG…GVFR, SESNSVESLGFCSVMPLAAVGYLDGTLAIYDLSTQTLRHQ, QHQSGIVQLLWEAGTAVVYTCSLDGIVRLWDARTGRLLTD, and GHTAEILDFALSKDASLVVTTSGDHKAKVFCVQRPD.

It localises to the cell membrane. The protein localises to the cytoplasm. In terms of biological role, plays a role in angiogenesis and cell migration. In smooth muscle cell migration, may act through the RhoA pathway. In Canis lupus familiaris (Dog), this protein is Angio-associated migratory cell protein (AAMP).